Consider the following 149-residue polypeptide: Large ribosomal subunit protein uL13 (149 aa).

Belongs to the universal ribosomal protein uL13 family. In terms of assembly, part of the 50S ribosomal subunit.

In terms of biological role, this protein is one of the early assembly proteins of the 50S ribosomal subunit, although it is not seen to bind rRNA by itself. It is important during the early stages of 50S assembly. This chain is Large ribosomal subunit protein uL13, found in Borrelia duttonii (strain Ly).